Reading from the N-terminus, the 370-residue chain is Glucan endo-1,3-beta-glucosidase, basic vacuolar isoform GLB (370 aa).

The signal sequence occupies residues 1–32; that stretch reads MSTSDKHNTPQMAAITLLGLLLVASTIEIAGA. Residue Gln33 is modified to Pyrrolidone carboxylic acid. The active-site Proton donor is Glu128. The active-site Nucleophile is the Glu273. Residues 349-370 constitute a propeptide, removed in mature form; the sequence is VSGGVWDSSVETNATASLISEM. Asn361 is a glycosylation site (N-linked (GlcNAc...) asparagine).

It belongs to the glycosyl hydrolase 17 family. In terms of tissue distribution, is expressed primarily in epidermal cell of healthy plant, and following induction by ethylene, accumulates in mesophyll cells.

It localises to the vacuole. The enzyme catalyses Hydrolysis of (1-&gt;3)-beta-D-glucosidic linkages in (1-&gt;3)-beta-D-glucans.. Functionally, implicated in the defense of plants against pathogens. The chain is Glucan endo-1,3-beta-glucosidase, basic vacuolar isoform GLB from Nicotiana tabacum (Common tobacco).